The sequence spans 1482 residues: Cystic fibrosis transmembrane conductance regulator (1482 aa).

Residues Met1–Phe77 lie on the Cytoplasmic side of the membrane. Residues Phe78–Gln98 traverse the membrane as a helical segment. The ABC transmembrane type-1 1 domain maps to Phe81–Leu365. The Extracellular portion of the chain corresponds to Pro99 to Tyr122. The helical transmembrane segment at Leu123–His146 threads the bilayer. Residues His147–Leu195 are Cytoplasmic-facing. Residues Ala196 to Trp216 traverse the membrane as a helical segment. The Extracellular segment spans residues Asp217–Ser222. Residues Ala223–Met243 form a helical membrane-spanning segment. Residues Met244–Lys298 lie on the Cytoplasmic side of the membrane. A helical membrane pass occupies residues Thr299–Phe319. The Extracellular portion of the chain corresponds to Leu320–Thr339. The chain crosses the membrane as a helical span at residues Ile340–Val358. The Cytoplasmic portion of the chain corresponds to Gln359–Asn859. ATP is bound by residues Trp401, Ser434, Gly458–Thr465, and Gln493. Positions Asn423–Gly646 constitute an ABC transporter 1 domain. Cys524 carries S-palmitoyl cysteine lipidation. 2 positions are modified to phosphoserine: Ser549 and Ser660. The interval Ser654–Glu832 is disordered R region. The residue at position 670 (Ser670) is a Phosphoserine; by PKA. Ser686 carries the post-translational modification Phosphoserine. Residue Lys688 forms a Glycyl lysine isopeptide (Lys-Gly) (interchain with G-Cter in ubiquitin) linkage. Phosphoserine occurs at positions 700, 712, 737, 769, 796, and 814. Residues Leu860–Val880 traverse the membrane as a helical segment. In terms of domain architecture, ABC transmembrane type-1 2 spans Leu860 to Ser1156. Over Gly881–Ile919 the chain is Extracellular. N-linked (GlcNAc...) asparagine glycans are attached at residues Asn895 and Asn901. The chain crosses the membrane as a discontinuously helical span at residues Tyr920–His940. The Cytoplasmic portion of the chain corresponds to Thr941 to Thr991. A helical membrane pass occupies residues Ile992–Ile1012. At Arg1013–Pro1014 the chain is on the extracellular side. Residues Tyr1015–Leu1035 traverse the membrane as a helical segment. Residues Gln1036–Thr1096 lie on the Cytoplasmic side of the membrane. A helical transmembrane segment spans residues Leu1097–Phe1117. Over Ile1118–Gly1131 the chain is Extracellular. A helical transmembrane segment spans residues Ile1132 to Ile1152. The Cytoplasmic segment spans residues Asp1153 to Leu1482. Residues Met1212–His1445 enclose the ABC transporter 2 domain. ATP is bound by residues Tyr1221 and Gly1246–Ser1253. The tract at residues Arg1388–Leu1482 is interaction with GORASP2. Residue Cys1397 is the site of S-palmitoyl cysteine attachment. Phosphoserine is present on residues Ser1446 and Ser1458. The short motif at Thr1480–Leu1482 is the PDZ-binding element.

It belongs to the ABC transporter superfamily. ABCC family. CFTR transporter (TC 3.A.1.202) subfamily. Monomer; does not require oligomerization for channel activity. May form oligomers in the membrane. Interacts with SLC26A3, SLC26A6 and NHERF1. Interacts with SHANK2. Interacts with MYO6. Interacts (via C-terminus) with GOPC (via PDZ domain); this promotes CFTR internalization and thereby decreases channel activity. Interacts with SLC4A7 through NHERF1. Found in a complex with MYO5B and RAB11A. Interacts with ANO1. Interacts with SLC26A8. Interacts with AHCYL1; the interaction increases CFTR activity. Interacts with CSE1L. The core-glycosylated form interacts with GORASP2 (via PDZ GRASP-type 1 domain) in respone to ER stress. Interacts with MARCHF2; the interaction leads to CFTR ubiqtuitination and degradation. Interacts with ADGRG2. In terms of processing, N-glycosylated. Post-translationally, phosphorylated; cAMP treatment promotes phosphorylation and activates the channel. Dephosphorylation decreases the ATPase activity (in vitro). Phosphorylation at PKA sites activates the channel. Phosphorylation at PKC sites enhances the response to phosphorylation by PKA. Phosphorylated by AMPK; this inhibits channel activity. Ubiquitinated, leading to its degradation in the lysosome. Deubiquitination by USP10 in early endosomes enhances its endocytic recycling to the cell membrane. Ubiquitinated by RNF185 during ER stress. Ubiquitinated by MARCHF2.

Its subcellular location is the apical cell membrane. It localises to the early endosome membrane. The protein resides in the cell membrane. It is found in the recycling endosome membrane. The protein localises to the endoplasmic reticulum membrane. Its subcellular location is the nucleus. The enzyme catalyses ATP + H2O + closed Cl(-) channel = ADP + phosphate + open Cl(-) channel.. It carries out the reaction chloride(in) = chloride(out). The catalysed reaction is hydrogencarbonate(in) = hydrogencarbonate(out). It catalyses the reaction ATP + H2O = ADP + phosphate + H(+). Its function is as follows. Epithelial ion channel that plays an important role in the regulation of epithelial ion and water transport and fluid homeostasis. Mediates the transport of chloride ions across the cell membrane. Possesses an intrinsic ATPase activity and utilizes ATP to gate its channel; the passive flow of anions through the channel is gated by cycles of ATP binding and hydrolysis by the ATP-binding domains. The ion channel is also permeable to HCO(3)(-); selectivity depends on the extracellular chloride concentration. Exerts its function also by modulating the activity of other ion channels and transporters. Contributes to the regulation of the pH and the ion content of the epithelial fluid layer. Modulates the activity of the epithelial sodium channel (ENaC) complex, in part by regulating the cell surface expression of the ENaC complex. May regulate bicarbonate secretion and salvage in epithelial cells by regulating the transporter SLC4A7. Can inhibit the chloride channel activity of ANO1. Plays a role in the chloride and bicarbonate homeostasis during sperm epididymal maturation and capacitation. The chain is Cystic fibrosis transmembrane conductance regulator from Didelphis virginiana (North American opossum).